The chain runs to 439 residues: Lactamase-like protein nscB (439 aa).

Positions 214, 216, 218, and 219 each coordinate Zn(2+). The Proton donor/acceptor role is filled by Asp-218.

Belongs to the metallo-beta-lactamase superfamily. Zn(2+) is required as a cofactor.

The protein operates within secondary metabolite biosynthesis. In terms of biological role, lactamase-like protein; part of the gene cluster that mediates the biosynthesis of neosartoricin B, a prenylated anthracenone that probably exhibits T-cell antiproliferative activity, suggestive of a physiological role as an immunosuppressive agent. The non-reducing polyketide synthase nscA probably synthesizes and cyclizes the decaketide backbone. The hydrolase nscB then mediates the product release through hydrolysis followed by spontaneous decarboxylation. The prenyltransferase nscD catalyzes the addition of the dimethylallyl group to the aromatic C5. The FAD-dependent monooxygenase nscC is then responsible for the stereospecific hydroxylation at C2. Neosartoricin B can be converted into two additional compounds neosartoricins C and D. Neosartoricin C is a spirocyclic compound that is cyclized through the attack of C3 hydroxyl on C14, followed by dehydration. On the other hand, neosartoricin D is a further cyclized compound in which attack of C2 on C14 in neosartoricin C results in the formation of the acetal-containing dioxabicyclo-octanone ring. Both of these compounds are novel and possibly represent related metabolites of the gene cluster. The polypeptide is Lactamase-like protein nscB (Arthroderma benhamiae (strain ATCC MYA-4681 / CBS 112371) (Trichophyton mentagrophytes)).